Here is a 414-residue protein sequence, read N- to C-terminus: uncharacterized protein (414 aa).

Residues 87 to 117 (KTNDDNKTNGRETHLRPSPSKPEYTGRPTQN) are disordered. Residues 88 to 101 (TNDDNKTNGRETHL) show a composition bias toward basic and acidic residues. Positions 243–405 (SMLQSSIDKL…RNKLEMEVER (163 aa)) form a coiled coil.

This is an uncharacterized protein from Encephalitozoon cuniculi (strain GB-M1) (Microsporidian parasite).